Here is a 60-residue protein sequence, read N- to C-terminus: Large ribosomal subunit protein bL32 (60 aa).

Belongs to the bacterial ribosomal protein bL32 family.

The protein is Large ribosomal subunit protein bL32 of Thermosipho melanesiensis (strain DSM 12029 / CIP 104789 / BI429).